Here is a 424-residue protein sequence, read N- to C-terminus: Tyrosine--tRNA ligase (424 aa).

L-tyrosine is bound at residue Tyr-37. The short motif at 42–51 is the 'HIGH' region element; it reads PTADSLHLGH. L-tyrosine is bound by residues Tyr-175 and Gln-179. The 'KMSKS' region motif lies at 235 to 239; sequence KFGKT. Lys-238 serves as a coordination point for ATP. The 58-residue stretch at 357 to 414 folds into the S4 RNA-binding domain; the sequence is AELQKALVSAQLAPSRSQARTLIQSSSISVNGKKQLKPEYIFTSEDRLLDRYTLLRRG.

It belongs to the class-I aminoacyl-tRNA synthetase family. TyrS type 1 subfamily. As to quaternary structure, homodimer.

It is found in the cytoplasm. It catalyses the reaction tRNA(Tyr) + L-tyrosine + ATP = L-tyrosyl-tRNA(Tyr) + AMP + diphosphate + H(+). In terms of biological role, catalyzes the attachment of tyrosine to tRNA(Tyr) in a two-step reaction: tyrosine is first activated by ATP to form Tyr-AMP and then transferred to the acceptor end of tRNA(Tyr). The polypeptide is Tyrosine--tRNA ligase (Hamiltonella defensa subsp. Acyrthosiphon pisum (strain 5AT)).